We begin with the raw amino-acid sequence, 1363 residues long: Insulin-like peptide receptor (1363 aa).

The first 29 residues, 1–29 (MRVVDKMAGLMWAALTLVIGLGLLVPSNG), serve as a signal peptide directing secretion. 16 N-linked (GlcNAc...) asparagine glycosylation sites follow: Asn-51, Asn-97, Asn-137, Asn-278, Asn-483, Asn-599, Asn-617, Asn-665, Asn-666, Asn-711, Asn-732, Asn-736, Asn-743, Asn-816, Asn-885, and Asn-898. 2 consecutive Fibronectin type-III domains span residues 473-586 (SFSR…TDAD) and 590-680 (HPQD…CPKS). Fibronectin type-III domains follow at residues 712–804 (ETRA…LART) and 813–912 (IPGN…VEEE). Residues 721-928 (ELPVTARPFY…QDPQQQVPVS (208 aa)) are Extracellular-facing. Residues 739–759 (LPSTNRTVPPTPTPNPNPQLE) form a disordered region. Residues 929–949 (LMIGMGVGFSLLLILAVIFGI) form a helical membrane-spanning segment. Residues 950-1363 (WYCTKKRFGD…NLRIPKSTLC (414 aa)) are Cytoplasmic-facing. One can recognise a Protein kinase domain in the interval 994–1283 (ITLIRELGQG…EIVEILSPEL (290 aa)). ATP contacts are provided by residues 1000 to 1008 (LGQGSFGMV) and Lys-1028. The tract at residues 1091–1117 (PEEDVGLSDSPASNEAKNSPFAENDND) is disordered. The Proton acceptor role is filled by Asp-1148. At Tyr-1174 the chain carries Phosphotyrosine; by autocatalysis. The interval 1316 to 1363 (DTETEMYPSGSEFSSTPSPPSETPYSHMNGSHPQNGSMNLRIPKSTLC) is disordered. Residues 1322–1331 (YPSGSEFSST) are compositionally biased toward low complexity. Positions 1343 to 1353 (MNGSHPQNGSM) are enriched in polar residues.

It belongs to the protein kinase superfamily. Tyr protein kinase family. Insulin receptor subfamily. In terms of assembly, probable tetramer of 2 alpha and 2 beta chains linked by disulfide bonds. The alpha chains contribute to the formation of the ligand-binding domain, while the beta chains carry the kinase domain. Mn(2+) serves as cofactor.

It localises to the membrane. The enzyme catalyses L-tyrosyl-[protein] + ATP = O-phospho-L-tyrosyl-[protein] + ADP + H(+). This receptor binds to the insulin related peptide and has a tyrosine-protein kinase activity. This is Insulin-like peptide receptor from Branchiostoma lanceolatum (Common lancelet).